Consider the following 290-residue polypeptide: Ribonuclease HIII (290 aa).

Residues L78 to A290 form the RNase H type-2 domain. Positions 84, 85, and 187 each coordinate a divalent metal cation.

This sequence belongs to the RNase HII family. RnhC subfamily. Mn(2+) is required as a cofactor. It depends on Mg(2+) as a cofactor.

The protein resides in the cytoplasm. The enzyme catalyses Endonucleolytic cleavage to 5'-phosphomonoester.. Functionally, endonuclease that specifically degrades the RNA of RNA-DNA hybrids. This chain is Ribonuclease HIII, found in Streptococcus pneumoniae (strain P1031).